A 428-amino-acid polypeptide reads, in one-letter code: G2/mitotic-specific cyclin-1 (428 aa).

A disordered region spans residues 1–22 (MKFSEEKNVSNNPTNFEGGLDS).

This sequence belongs to the cyclin family. Cyclin AB subfamily. As to quaternary structure, interacts with the CDC2 protein kinase to form a serine/threonine kinase holoenzyme complex also known as maturation promoting factor (MPF). The cyclin subunit imparts substrate specificity to the complex.

In terms of biological role, essential for the control of the cell cycle at the G2/M (mitosis) transition. In Medicago sativa subsp. varia (Alfalfa), this protein is G2/mitotic-specific cyclin-1.